The chain runs to 464 residues: Glycine receptor subunit alpha-3 (464 aa).

The N-terminal stretch at 1 to 33 (MAHVRHFRTLVSGFYFWEAALLLSLVATKETNS) is a signal peptide. Residues 34–255 (ARSRSAPMSP…RFHLERQMGY (222 aa)) are Extracellular-facing. N-linked (GlcNAc...) asparagine glycosylation occurs at asparagine 71. A disulfide bond links cysteine 171 and cysteine 185. Positions 225 and 227 each coordinate Zn(2+). An intrachain disulfide couples cysteine 231 to cysteine 242. 235–240 (YNTGKF) is a strychnine binding site. Histidine 248 provides a ligand contact to Zn(2+). A helical membrane pass occupies residues 256 to 277 (YLIQMYIPSLLIVILSWVSFWI). Over 278-282 (NMDAA) the chain is Cytoplasmic. A helical transmembrane segment spans residues 283–303 (PARVALGITTVLTMTTQSSGS). The Extracellular portion of the chain corresponds to 304–314 (RASLPKVSYVK). Residues 315–335 (AIDIWMAVCLLFVFSALLEYA) form a helical membrane-spanning segment. Over 336-430 (AVNFVSRQHK…FIDRAKKIDT (95 aa)) the chain is Cytoplasmic. Serine 370 bears the Phosphoserine mark. Position 379 is a phosphoserine; by PKA (serine 379). A helical transmembrane segment spans residues 431–451 (ISRACFPLAFLIFNIFYWVIY). Over 452 to 464 (KILRHEDIHQQQD) the chain is Extracellular.

It belongs to the ligand-gated ion channel (TC 1.A.9) family. Glycine receptor (TC 1.A.9.3) subfamily. GLRA3 sub-subfamily. As to quaternary structure, homopentamer (in vitro). Heteropentamer composed of GLRA3 and GLRB. Both homopentamers and heteropentamers form functional ion channels, but their characteristics are subtly different. Post-translationally, phosphorylated by PKA; this causes down-regulation of channel activity. Dephosphorylated in response to activation of HTR1A signaling; this increases channel activity. Detected in brainstem, also in neurons that control rhythmic breathing. Detected in superficial laminae of the dorsal horn of the thoracic spinal cord. Detected in dentate gyrus in hippocampus, especially in stratum granulare. Detected in the inner plexiform layer in the retina (at protein level). Detected in midbrain, thalamus, brain cortex, hippocampus, and at lower levels in cerebellum.

The protein resides in the postsynaptic cell membrane. It is found in the synapse. Its subcellular location is the perikaryon. The protein localises to the cell projection. It localises to the dendrite. The protein resides in the cell membrane. The catalysed reaction is chloride(in) = chloride(out). Its activity is regulated as follows. Inhibited by prostaglandin E2, probably via PKA-mediated phosphorylation at Ser-379. Glycine receptors are ligand-gated chloride channels. Channel opening is triggered by extracellular glycine. Channel characteristics depend on the subunit composition; heteropentameric channels display faster channel closure. Plays an important role in the down-regulation of neuronal excitability. Contributes to the generation of inhibitory postsynaptic currents. Contributes to increased pain perception in response to increased prostaglandin E2 levels. Plays a role in the regulation of breathing rhythm, especially of the duration of the postinspiratory phase. Plays a role in cellular responses to ethanol. This Mus musculus (Mouse) protein is Glycine receptor subunit alpha-3 (Glra3).